The sequence spans 472 residues: Glutamine synthetase (472 aa).

One can recognise a GS beta-grasp domain in the interval 13 to 101; it reads SKARFVDLRF…TCDVIDPADG (89 aa). The region spanning 108-472 is the GS catalytic domain; it reads PRSIARRAEA…PLEFEMYYSL (365 aa). Residues E133 and E135 each contribute to the Mg(2+) site. ATP is bound at residue E211. The Mg(2+) site is built by E216 and E224. Residues 268–269 and G269 contribute to the L-glutamate site; that span reads NG. H273 lines the Mg(2+) pocket. ATP is bound by residues 275-277 and S277; that span reads HQS. The L-glutamate site is built by R325, E331, and R343. 3 residues coordinate ATP: R343, R348, and K356. E361 contacts Mg(2+). Residue R363 coordinates L-glutamate. Y401 is subject to O-AMP-tyrosine.

Belongs to the glutamine synthetase family. In terms of assembly, oligomer of 12 subunits arranged in the form of two hexameric ring. Requires Mg(2+) as cofactor.

The protein localises to the cytoplasm. It catalyses the reaction L-glutamate + NH4(+) + ATP = L-glutamine + ADP + phosphate + H(+). The activity of this enzyme could be controlled by adenylation under conditions of abundant glutamine. Catalyzes the ATP-dependent biosynthesis of glutamine from glutamate and ammonia. The sequence is that of Glutamine synthetase from Neisseria gonorrhoeae.